The primary structure comprises 140 residues: Large ribosomal subunit protein uL15 (140 aa).

Residues 1–32 (MDTKKFRGSRTCGGGTHKNRRGAGNRGGRGKA) are disordered.

The protein belongs to the universal ribosomal protein uL15 family. As to quaternary structure, part of the 50S ribosomal subunit.

Binds to the 23S rRNA. This Methanosarcina acetivorans (strain ATCC 35395 / DSM 2834 / JCM 12185 / C2A) protein is Large ribosomal subunit protein uL15.